The sequence spans 362 residues: Class I histocompatibility antigen, Gogo-OKO alpha chain (362 aa).

An N-terminal signal peptide occupies residues 1–24 (MAVVAPRTLLLLLSGTLALTRTWA). An alpha-1 region spans residues 25-114 (GSHSMRYFYT…LRGYYNQSEG (90 aa)). The Extracellular portion of the chain corresponds to 25-308 (GSHSMRYFYT…EPSSQPTIPI (284 aa)). Asparagine 110 carries an N-linked (GlcNAc...) asparagine glycan. Positions 115–206 (GSHTIQRMYG…ENGKETLQRT (92 aa)) are alpha-2. Intrachain disulfides connect cysteine 125–cysteine 188 and cysteine 227–cysteine 283. An alpha-3 region spans residues 207–298 (DPPKTHMTHH…GLPKPLTLRW (92 aa)). In terms of domain architecture, Ig-like C1-type spans 209-295 (PKTHMTHHPV…QHEGLPKPLT (87 aa)). The connecting peptide stretch occupies residues 299-308 (EPSSQPTIPI). Residues 309 to 332 (VGIIAGLVLLGAVITGAVVAAMMW) form a helical membrane-spanning segment. At 333–362 (RKKSSGRKGGSYSQAASSDSAQGSDVSLTA) the chain is on the cytoplasmic side. Residues 337 to 362 (SGRKGGSYSQAASSDSAQGSDVSLTA) form a disordered region. The segment covering 342–362 (GSYSQAASSDSAQGSDVSLTA) has biased composition (low complexity).

It belongs to the MHC class I family. In terms of assembly, heterodimer of an alpha chain and a beta chain (beta-2-microglobulin).

The protein resides in the membrane. Involved in the presentation of foreign antigens to the immune system. This chain is Class I histocompatibility antigen, Gogo-OKO alpha chain, found in Gorilla gorilla gorilla (Western lowland gorilla).